The primary structure comprises 220 residues: UPF0319 protein YccT (220 aa).

Residues 1 to 20 (MKTGIVTTLIALCLPVSVFA) form the signal peptide.

It belongs to the UPF0319 family.

The polypeptide is UPF0319 protein YccT (Escherichia coli O139:H28 (strain E24377A / ETEC)).